A 166-amino-acid polypeptide reads, in one-letter code: UPF0254 protein Maeo_0668 (166 aa).

The protein belongs to the UPF0254 family.

The polypeptide is UPF0254 protein Maeo_0668 (Methanococcus aeolicus (strain ATCC BAA-1280 / DSM 17508 / OCM 812 / Nankai-3)).